Reading from the N-terminus, the 569-residue chain is Small ribosomal subunit protein bS1 (569 aa).

S1 motif domains are found at residues 52-116, 134-199, 220-288, 305-375, 392-462, and 479-548; these read GAIL…LSRE, GSIV…VSRR, GERR…LGLK, GKRV…LGLK, GLRV…LGVK, and GSDI…LSIK.

Belongs to the bacterial ribosomal protein bS1 family.

Its function is as follows. Binds mRNA; thus facilitating recognition of the initiation point. It is needed to translate mRNA with a short Shine-Dalgarno (SD) purine-rich sequence. This chain is Small ribosomal subunit protein bS1 (rpsA), found in Chlamydia trachomatis serovar D (strain ATCC VR-885 / DSM 19411 / UW-3/Cx).